Consider the following 590-residue polypeptide: AT-rich interactive domain-containing protein 5A (590 aa).

The disordered stretch occupies residues 1–52 (MAAPPAKGNTEQSEEGDLPQLPVSPKPDDEQSRSQSPTQLQDSPEAGGEQEE). The interval 1-294 (MAAPPAKGNT…NKDIQDSPQN (294 aa)) is interaction with SOX9. Ser24 carries the post-translational modification Phosphoserine. The span at 33–42 (RSQSPTQLQD) shows a compositional bias: polar residues. An ARID domain is found at 50-142 (QEEEQAFLVS…LVLPYVRHLK (93 aa)). Residues Lys80 and Lys89 each participate in a glycyl lysine isopeptide (Lys-Gly) (interchain with G-Cter in ubiquitin) cross-link. Positions 141–229 (LKGEDDKPLP…SGPSPPLTGA (89 aa)) are disordered. Over residues 160-186 (MAKELRGDDGTTEKLKKAKDSEERRVE) the composition is skewed to basic and acidic residues. Residues 187 to 210 (QTTPGKTKSDATGQTQLPCQGSSR) are compositionally biased toward polar residues. Ser253 and Ser283 each carry phosphoserine. 3 disordered regions span residues 275-323 (EGCR…RMEA), 367-402 (GPPG…TRKR), and 419-443 (VPTE…RGLE). Basic and acidic residues predominate over residues 367–381 (GPPGKEEGPTTKESH). A phosphoserine mark is found at Ser433 and Ser458.

Interacts with SOX9. Interacts with ESR1. Interacts with RORC. In terms of processing, phosphorylated by MAPK14 on serine residues involving a TLR4 signaling pathway upon lipopolysaccharide (LPS) stimulation leading to its ubiquitination and proteasomal degradation. Post-translationally, ubiquitinated leading to proteasomal degradation; involving WWP1 linked to MAPK14-mediated phosphorylation upon LPS stimulation. Expressed in T cells (at protein level). Expressed at high levels in cartilage, heart, testis and bone.

It is found in the nucleus. Its function is as follows. DNA-binding protein that may regulate transcription and act as a repressor by binding to AT-rich stretches in the promoter region of target genes. May positively regulate chondrocyte-specific transcription such as of COL2A1 in collaboration with SOX9 and positively regulate histone H3 acetylation at chondrocyte-specific genes. May stimulate early-stage chondrocyte differentiation and inhibit later stage differention. Can repress ESR1-mediated transcriptional activation; proposed to act as corepressor for selective nuclear hormone receptors. As an RNA-binding protein, involved in the regulation of inflammatory response by stabilizing selective inflammation-related mRNAs, such as STAT3 and TBX21. Also stabilizes IL6 mRNA. Binds to stem loop structures located in the 3'UTRs of IL6, STAT3 and TBX21 mRNAs; at least for STAT3 prevents binding of ZC3H12A to the mRNA stem loop structure thus inhibiting its degradation activity. Contributes to elevated IL6 levels possibly implicated in autoimmunity processes. IL6-dependent stabilization of STAT3 mRNA may promote differentiation of naive CD4+ T-cells into T-helper Th17 cells. In CD4+ T-cells may also inhibit RORC-induced Th17 cell differentiation independently of IL6 signaling. Stabilization of TBX21 mRNA contributes to elevated interferon-gamma secretion in Th1 cells possibly implicated in the establishment of septic shock. Stabilizes TNFRSF4/OX40 mRNA by binding to the conserved stem loop structure in its 3'UTR; thereby competing with the mRNA-destabilizing functions of RC3H1 and endoribonuclease ZC3H12A. In Mus musculus (Mouse), this protein is AT-rich interactive domain-containing protein 5A (Arid5a).